A 1091-amino-acid polypeptide reads, in one-letter code: Exonuclease/helicase subunit RexB (1091 aa).

This sequence belongs to the helicase family. AddB/RexB type 2 subfamily. In terms of assembly, heterodimer of RexA (AddA) and RexB. Requires Mg(2+) as cofactor.

Its function is as follows. Involved in DNA double-strand break repair. Is not involved in recombination during natural competence or in plasmid establishment. Functionally, the heterodimer acts as both an ATP-dependent DNA helicase and an ATP-dependent, dual-direction single-stranded exonuclease. Recognizes the chi site generating a DNA molecule suitable for the initiation of homologous recombination. This subunit has 5' -&gt; 3' nuclease activity but not helicase activity. This Streptococcus pneumoniae serotype 4 (strain ATCC BAA-334 / TIGR4) protein is Exonuclease/helicase subunit RexB.